Reading from the N-terminus, the 83-residue chain is Cytochrome b559 subunit alpha (83 aa).

Residues 21–35 form a helical membrane-spanning segment; it reads IIHTITVPMLFLAGW. His-23 is a heme binding site.

It belongs to the PsbE/PsbF family. As to quaternary structure, heterodimer of an alpha subunit and a beta subunit. PSII is composed of 1 copy each of membrane proteins PsbA, PsbB, PsbC, PsbD, PsbE, PsbF, PsbH, PsbI, PsbJ, PsbK, PsbL, PsbM, PsbT, PsbX, PsbY, PsbZ, Psb30/Ycf12, peripheral proteins PsbO, CyanoQ (PsbQ), PsbU, PsbV and a large number of cofactors. It forms dimeric complexes. Heme b serves as cofactor.

The protein resides in the cellular thylakoid membrane. In terms of biological role, this b-type cytochrome is tightly associated with the reaction center of photosystem II (PSII). PSII is a light-driven water:plastoquinone oxidoreductase that uses light energy to abstract electrons from H(2)O, generating O(2) and a proton gradient subsequently used for ATP formation. It consists of a core antenna complex that captures photons, and an electron transfer chain that converts photonic excitation into a charge separation. In Acaryochloris marina (strain MBIC 11017), this protein is Cytochrome b559 subunit alpha.